The chain runs to 106 residues: UPF0145 protein Pfl01_1745 (106 aa).

It belongs to the UPF0145 family.

The protein is UPF0145 protein Pfl01_1745 of Pseudomonas fluorescens (strain Pf0-1).